A 115-amino-acid polypeptide reads, in one-letter code: Large ribosomal subunit protein bL20 (115 aa).

The protein belongs to the bacterial ribosomal protein bL20 family.

Its function is as follows. Binds directly to 23S ribosomal RNA and is necessary for the in vitro assembly process of the 50S ribosomal subunit. It is not involved in the protein synthesizing functions of that subunit. This is Large ribosomal subunit protein bL20 from Prochlorococcus marinus (strain MIT 9301).